We begin with the raw amino-acid sequence, 150 residues long: Ribonuclease HI (150 aa).

Residues 1-142 (MSDSVELFTD…ADQLANRGVD (142 aa)) form the RNase H type-1 domain. The Mg(2+) site is built by aspartate 10, glutamate 48, aspartate 70, and aspartate 134.

This sequence belongs to the RNase H family. In terms of assembly, monomer. The cofactor is Mg(2+).

It localises to the cytoplasm. The enzyme catalyses Endonucleolytic cleavage to 5'-phosphomonoester.. Functionally, endonuclease that specifically degrades the RNA of RNA-DNA hybrids. In Pseudomonas syringae pv. tomato (strain ATCC BAA-871 / DC3000), this protein is Ribonuclease HI.